Reading from the N-terminus, the 505-residue chain is Lysine--tRNA ligase, heat inducible (505 aa).

2 positions are modified to N6-acetyllysine: Lys114 and Lys156. Mg(2+)-binding residues include Glu415 and Glu422.

This sequence belongs to the class-II aminoacyl-tRNA synthetase family. Homodimer. Mg(2+) is required as a cofactor.

It localises to the cytoplasm. The enzyme catalyses tRNA(Lys) + L-lysine + ATP = L-lysyl-tRNA(Lys) + AMP + diphosphate. The polypeptide is Lysine--tRNA ligase, heat inducible (lysU) (Escherichia coli O157:H7).